The primary structure comprises 200 residues: Adenylate kinase (200 aa).

ATP is bound at residue 11-16 (GAGKGT). Residues 31–60 (STGDIFRQNIKDRTELGQQVQALVDAGNYV) are NMP. AMP-binding positions include T32, R37, 58–60 (NYV), 86–89 (GYPR), and Q93. The tract at residues 127–137 (RRAAEQGRADD) is LID. R128 is an ATP binding site. Residues R134 and R145 each coordinate AMP. G173 provides a ligand contact to ATP.

It belongs to the adenylate kinase family. Monomer.

Its subcellular location is the cytoplasm. It carries out the reaction AMP + ATP = 2 ADP. It functions in the pathway purine metabolism; AMP biosynthesis via salvage pathway; AMP from ADP: step 1/1. In terms of biological role, catalyzes the reversible transfer of the terminal phosphate group between ATP and AMP. Plays an important role in cellular energy homeostasis and in adenine nucleotide metabolism. This chain is Adenylate kinase, found in Clavibacter michiganensis subsp. michiganensis (strain NCPPB 382).